The sequence spans 474 residues: 3-isopropylmalate dehydratase large subunit (474 aa).

The [4Fe-4S] cluster site is built by C355, C415, and C418.

The protein belongs to the aconitase/IPM isomerase family. LeuC type 1 subfamily. Heterodimer of LeuC and LeuD. It depends on [4Fe-4S] cluster as a cofactor.

It carries out the reaction (2R,3S)-3-isopropylmalate = (2S)-2-isopropylmalate. The protein operates within amino-acid biosynthesis; L-leucine biosynthesis; L-leucine from 3-methyl-2-oxobutanoate: step 2/4. In terms of biological role, catalyzes the isomerization between 2-isopropylmalate and 3-isopropylmalate, via the formation of 2-isopropylmaleate. The polypeptide is 3-isopropylmalate dehydratase large subunit (Shewanella sp. (strain W3-18-1)).